The sequence spans 200 residues: Small ribosomal subunit protein uS4 (200 aa).

The S4 RNA-binding domain occupies 92 to 155 (SRLDAVVYQL…QKLNIIAESV (64 aa)).

The protein belongs to the universal ribosomal protein uS4 family. As to quaternary structure, part of the 30S ribosomal subunit. Contacts protein S5. The interaction surface between S4 and S5 is involved in control of translational fidelity.

Its function is as follows. One of the primary rRNA binding proteins, it binds directly to 16S rRNA where it nucleates assembly of the body of the 30S subunit. With S5 and S12 plays an important role in translational accuracy. This Macrococcus caseolyticus (strain JCSC5402) (Macrococcoides caseolyticum) protein is Small ribosomal subunit protein uS4.